The following is a 252-amino-acid chain: 5'-nucleotidase SurE (252 aa).

Positions 8, 9, 40, and 92 each coordinate a divalent metal cation.

The protein belongs to the SurE nucleotidase family. The cofactor is a divalent metal cation.

The protein resides in the cytoplasm. The catalysed reaction is a ribonucleoside 5'-phosphate + H2O = a ribonucleoside + phosphate. Functionally, nucleotidase that shows phosphatase activity on nucleoside 5'-monophosphates. This is 5'-nucleotidase SurE from Mesorhizobium japonicum (strain LMG 29417 / CECT 9101 / MAFF 303099) (Mesorhizobium loti (strain MAFF 303099)).